The chain runs to 521 residues: Vang-like protein 2 (521 aa).

The interval 1-81 is disordered; that stretch reads MDNDSQYSGY…TTVVTGTSEH (81 aa). The Cytoplasmic portion of the chain corresponds to 1–108; sequence MDNDSQYSGY…AKLDCSRHLG (108 aa). The segment covering 15-33 has biased composition (basic residues); it reads GHSRSSRKHRDRRERHRSK. A compositionally biased stretch (basic and acidic residues) spans 57-67; sequence ESTRGEDRDDN. Residues 69 to 81 show a composition bias toward low complexity; that stretch reads GETTTVVTGTSEH. The chain crosses the membrane as a helical span at residues 109-129; it reads VVIGGALALLSFLTPIAFMLL. The Extracellular portion of the chain corresponds to 130 to 147; that stretch reads PQILWREDLEQCGTACEG. Residues 148 to 168 form a helical membrane-spanning segment; that stretch reads LFISVAFKLLILLLGSWALFF. Residues 169–178 lie on the Cytoplasmic side of the membrane; sequence RRPKAFFPRV. The chain crosses the membrane as a helical span at residues 179-199; it reads FVFRALLMVLVFLLVVSYWLF. The Extracellular portion of the chain corresponds to 200 to 218; sequence YGVRILESRDKNYQGIVQY. Residues 219 to 239 form a helical membrane-spanning segment; the sequence is AVSLVDALLFVHYLAVVLLEL. Residues 240–521 lie on the Cytoplasmic side of the membrane; the sequence is RQLQPQFTVK…VMRLQSETSV (282 aa). The short motif at 518–521 is the PDZ-binding element; that stretch reads ETSV.

Belongs to the Vang family. Interacts with dvl/dsh. Interacts with prickle3.

It localises to the cell membrane. In terms of biological role, has a role in non-canonical Wnt/planar cell polarity (PCP) signaling; can recruit dvl/dsh and prickle from the cytoplasm to the plasma membrane. Acts in a PCP complex to regulate the polarized assembly of fibronectrin on the surface of the mesoderm during gastrulation. Regulates convergent extension in both dorsal mesoderm and neural tissue without affecting cell fate. Regulates neural fold closure during neurulation. May be required for cell surface localization of fzd3 and fzd6 in the inner ear. The polypeptide is Vang-like protein 2 (Xenopus tropicalis (Western clawed frog)).